The following is a 299-amino-acid chain: Ribosomal RNA small subunit methyltransferase H (299 aa).

S-adenosyl-L-methionine-binding positions include 32–34 (AGH), Asp-52, Phe-79, Asp-100, and Gln-107.

It belongs to the methyltransferase superfamily. RsmH family.

The protein resides in the cytoplasm. It catalyses the reaction cytidine(1402) in 16S rRNA + S-adenosyl-L-methionine = N(4)-methylcytidine(1402) in 16S rRNA + S-adenosyl-L-homocysteine + H(+). Functionally, specifically methylates the N4 position of cytidine in position 1402 (C1402) of 16S rRNA. This chain is Ribosomal RNA small subunit methyltransferase H, found in Mycoplasmopsis pulmonis (strain UAB CTIP) (Mycoplasma pulmonis).